The sequence spans 407 residues: Zinc finger protein 260 (407 aa).

The disordered stretch occupies residues methionine 1–lysine 21. Over residues glutamate 10–lysine 21 the composition is skewed to basic and acidic residues. The segment at tyrosine 23–histidine 45 adopts a C2H2-type 1 zinc-finger fold. The C2H2-type 2; degenerate zinc-finger motif lies at proline 51–arginine 73. 11 C2H2-type zinc fingers span residues tyrosine 79 to histidine 101, tyrosine 131 to histidine 153, phenylalanine 159 to histidine 181, phenylalanine 187 to histidine 209, tyrosine 215 to histidine 237, tyrosine 243 to histidine 265, tyrosine 271 to histidine 293, tyrosine 299 to histidine 321, tyrosine 327 to histidine 349, tyrosine 355 to histidine 377, and tyrosine 383 to histidine 405.

The protein belongs to the krueppel C2H2-type zinc-finger protein family. As to quaternary structure, binds DNA. Interacts with GATA4. Expressed in both embryonic, fetal and adult heart. Also expressed in lung, skeletal muscle and adrenal glands.

The protein resides in the nucleus. Functionally, transcription factor that acts as a cardiac regulator and an effector of alpha1-adrenergic signaling. Binds to PE response elements (PERE) present in the promoter of genes such as ANF/NPPA and acts as a direct transcriptional activator of NPPA. Also acts as a cofactor with GATA4, a key cardiac regulator. The polypeptide is Zinc finger protein 260 (Znf260) (Rattus norvegicus (Rat)).